The chain runs to 173 residues: Lipid A deacylase PagL (173 aa).

The N-terminal stretch at 1-23 (MKKLLPLAVLAALSSVHVASAQA) is a signal peptide. At 25-28 (DVSA) the chain is on the periplasmic side. A beta stranded transmembrane segment spans residues 29–32 (AVGA). A topological domain (periplasmic) is located at residue Thr-33. Residues 34–49 (GQSGMTYRLGLSWDWD) traverse the membrane as a beta stranded segment. Over 50–56 (KSWWQTS) the chain is Extracellular. Residues 57 to 71 (TGRLTGYWDAGYTYW) traverse the membrane as a beta stranded segment. Topologically, residues 72 to 73 (EG) are periplasmic. Residues 74–89 (GDEGAGKHSLSFAPVF) form a beta stranded membrane-spanning segment. Position 90 (Val-90) is a topological domain, extracellular. A beta stranded membrane pass occupies residues 91-93 (YEF). The Periplasmic segment spans residues 94–95 (AG). Residues 96–98 (DSI) form a beta stranded membrane-spanning segment. The Extracellular segment spans residues 99–100 (KP). The beta stranded transmembrane segment at 101–115 (FIEAGIGVAAFSGTR) threads the bilayer. Residues 116-117 (VG) are Periplasmic-facing. Residues 118-128 (DQNLGSSLNFE) traverse the membrane as a beta stranded segment. Topologically, residues 129–138 (DRIGAGLKFA) are extracellular. Residues 139 to 148 (NGQSVGVRAI) traverse the membrane as a beta stranded segment. Residues His-149, Ser-151, and Glu-163 each act as charge relay system in the active site. The Periplasmic portion of the chain corresponds to 149-173 (HYSNAGLKQPNDGIESYSLFYKIPI).

It belongs to the PagL family. Homodimer.

Its subcellular location is the cell outer membrane. It carries out the reaction a 3-(acyloxy)acyl derivative of bacterial toxin + H2O = a 3-hydroxyacyl derivative of bacterial toxin + a fatty acid + H(+). Its activity is regulated as follows. Decreased activity at low temperatures (15 or 21 degrees Celsius). Functionally, has lipid A 3-O-deacylase activity. Hydrolyzes the ester bond at the 3 position of lipid A, a bioactive component of lipopolysaccharide (LPS), thereby releasing the primary fatty acyl moiety. Lacks fatty acyl chain-length specificity as removes both 3-OH C10 and 3-OH C14 fatty acids from lipid A. The polypeptide is Lipid A deacylase PagL (Pseudomonas aeruginosa (strain ATCC 15692 / DSM 22644 / CIP 104116 / JCM 14847 / LMG 12228 / 1C / PRS 101 / PAO1)).